A 1101-amino-acid chain; its full sequence is Coiled-coil domain-containing protein 150 (1101 aa).

Coiled coils occupy residues 106 to 299, 398 to 680, 712 to 940, and 970 to 1033; these read RLES…DLTS, AAHA…KEDN, DSEI…NYEQ, and VRNK…EAHR. A compositionally biased stretch (basic and acidic residues) spans 1055 to 1071; sequence SGEDRWQEKDQDVKHDV. The tract at residues 1055 to 1101 is disordered; the sequence is SGEDRWQEKDQDVKHDVMSNQSVLHRWERKQNLRPMPKKYHSEVQRK.

This chain is Coiled-coil domain-containing protein 150 (CCDC150), found in Homo sapiens (Human).